We begin with the raw amino-acid sequence, 188 residues long: GMP synthase [glutamine-hydrolyzing] subunit A (188 aa).

Positions 2-188 (KIYIIDNGGQ…FKNFIEKCRR (187 aa)) constitute a Glutamine amidotransferase type-1 domain. The active-site Nucleophile is C79. Active-site residues include H166 and E168.

As to quaternary structure, heterodimer composed of a glutamine amidotransferase subunit (A) and a GMP-binding subunit (B).

It catalyses the reaction XMP + L-glutamine + ATP + H2O = GMP + L-glutamate + AMP + diphosphate + 2 H(+). The protein operates within purine metabolism; GMP biosynthesis; GMP from XMP (L-Gln route): step 1/1. Functionally, catalyzes the synthesis of GMP from XMP. This Picrophilus torridus (strain ATCC 700027 / DSM 9790 / JCM 10055 / NBRC 100828 / KAW 2/3) protein is GMP synthase [glutamine-hydrolyzing] subunit A.